Consider the following 85-residue polypeptide: Beta-insect depressant toxin Lqh-dprIT3c (85 aa).

An N-terminal signal peptide occupies residues methionine 1–alanine 21. One can recognise an LCN-type CS-alpha/beta domain in the interval aspartate 22–glycine 82. Disulfide bonds link cysteine 31/cysteine 81, cysteine 35/cysteine 56, cysteine 42/cysteine 63, and cysteine 46/cysteine 65. Glycine 82 carries the glycine amide modification.

Belongs to the long (4 C-C) scorpion toxin superfamily. Sodium channel inhibitor family. Beta subfamily. As to expression, expressed by the venom gland.

It is found in the secreted. In terms of biological role, depressant insect beta-toxins cause a transient contraction paralysis followed by a slow flaccid paralysis. They bind voltage-independently at site-4 of sodium channels (Nav) and block action potentials, primarily by depolarizing the axonal membrane and suppressing the sodium current. This depressant toxin is active only on insects. It is found in a relatively small amount in the venom, and its activity on insects is 10-fold higher compared to other known depressant toxins. This chain is Beta-insect depressant toxin Lqh-dprIT3c, found in Leiurus hebraeus (Hebrew deathstalker scorpion).